Here is a 238-residue protein sequence, read N- to C-terminus: Ribonuclease PH (238 aa).

Residues arginine 86 and 124-126 (GTR) each bind phosphate.

The protein belongs to the RNase PH family. Homohexameric ring arranged as a trimer of dimers.

The catalysed reaction is tRNA(n+1) + phosphate = tRNA(n) + a ribonucleoside 5'-diphosphate. Its function is as follows. Phosphorolytic 3'-5' exoribonuclease that plays an important role in tRNA 3'-end maturation. Removes nucleotide residues following the 3'-CCA terminus of tRNAs; can also add nucleotides to the ends of RNA molecules by using nucleoside diphosphates as substrates, but this may not be physiologically important. Probably plays a role in initiation of 16S rRNA degradation (leading to ribosome degradation) during starvation. The polypeptide is Ribonuclease PH (Vibrio atlanticus (strain LGP32) (Vibrio splendidus (strain Mel32))).